Here is a 381-residue protein sequence, read N- to C-terminus: Cytochrome b (381 aa).

4 helical membrane-spanning segments follow: residues 34–54 (FGSL…FLAM), 78–99 (WLIR…YLHI), 114–134 (WNIG…GYVL), and 179–199 (FFAF…IHLL). The heme b site is built by His-84 and His-98. Heme b is bound by residues His-183 and His-197. Residue His-202 participates in a ubiquinone binding. The next 4 membrane-spanning stretches (helical) occupy residues 227 to 247 (YKDI…TLFI), 289 to 309 (LGGV…PLLQ), 321 to 341 (MTQI…WIGG), and 348 to 368 (FIMV…IIIP).

Belongs to the cytochrome b family. As to quaternary structure, the cytochrome bc1 complex contains 3 respiratory subunits (MT-CYB, CYC1 and UQCRFS1), 2 core proteins (UQCRC1 and UQCRC2) and probably 6 low-molecular weight proteins. Heme b serves as cofactor.

It is found in the mitochondrion inner membrane. Functionally, component of the ubiquinol-cytochrome c reductase complex (complex III or cytochrome b-c1 complex) that is part of the mitochondrial respiratory chain. The b-c1 complex mediates electron transfer from ubiquinol to cytochrome c. Contributes to the generation of a proton gradient across the mitochondrial membrane that is then used for ATP synthesis. The chain is Cytochrome b (mt-cyb) from Galeocerdo cuvier (Tiger shark).